Reading from the N-terminus, the 37-residue chain is Large ribosomal subunit protein bL36 (37 aa).

This sequence belongs to the bacterial ribosomal protein bL36 family.

The protein is Large ribosomal subunit protein bL36 of Clostridium perfringens (strain ATCC 13124 / DSM 756 / JCM 1290 / NCIMB 6125 / NCTC 8237 / Type A).